A 293-amino-acid chain; its full sequence is Ribokinase (293 aa).

Residues 11-13, 39-43, and Glu139 contribute to the substrate site; these read SMD and GKGAN. Residues Asn183 and 210-215 contribute to the ATP site; that span reads TEGKQG. Residues Asp236 and Thr238 each coordinate K(+). ATP is bound by residues 241-242 and Asn266; that span reads GD. Asp242 is a substrate binding site. Asp242 acts as the Proton acceptor in catalysis. The K(+) site is built by Ser272, Ser275, and Gly277.

The protein belongs to the carbohydrate kinase PfkB family. Ribokinase subfamily. Homodimer. The cofactor is Mg(2+).

Its subcellular location is the cytoplasm. The catalysed reaction is D-ribose + ATP = D-ribose 5-phosphate + ADP + H(+). The protein operates within carbohydrate metabolism; D-ribose degradation; D-ribose 5-phosphate from beta-D-ribopyranose: step 2/2. Its activity is regulated as follows. Activated by a monovalent cation that binds near, but not in, the active site. The most likely occupant of the site in vivo is potassium. Ion binding induces a conformational change that may alter substrate affinity. Functionally, catalyzes the phosphorylation of ribose at O-5 in a reaction requiring ATP and magnesium. The resulting D-ribose-5-phosphate can then be used either for sythesis of nucleotides, histidine, and tryptophan, or as a component of the pentose phosphate pathway. The protein is Ribokinase of Bacillus subtilis (strain 168).